Here is a 260-residue protein sequence, read N- to C-terminus: Magnesium dechelatase SGRL, chloroplastic (260 aa).

The N-terminal 45 residues, 1-45 (MACYIVPYYHHPVLSHPNREIFSHRHHHHHRFCNNLLNRRISVPR), are a transit peptide targeting the chloroplast.

It belongs to the staygreen family. Interacts with the light harvesting complex II (LHCII). Interacts with the chlorophyll catabolic enzymes (CCEs) NYC1, NOL, PAO and RCCR. Expressed in cotyledons, pollen and young leaves.

The protein resides in the plastid. It is found in the chloroplast thylakoid. The catalysed reaction is chlorophyllide a + 2 H(+) = pheophorbide a + Mg(2+). Functionally, magnesium chelatase involved in chlorophyll a degradation in the chlorophyll-protein complexes of photosystem I (PSI) and photosystem II (PSII). Contributes to the degradation of PSI and PSII in the thylakoid membranes. Recombinant SGRL possesses high dechelating activity against chlorophyllide a, very low activity against chlorophyll a, and no activity against chlorophyll b. Contributes to abiotic stress-induced chlorophyll degradation and leaf yellowing during vegetative plant growth. This Arabidopsis thaliana (Mouse-ear cress) protein is Magnesium dechelatase SGRL, chloroplastic.